Here is a 1287-residue protein sequence, read N- to C-terminus: Pullulanase A (1287 aa).

The N-terminal stretch at Met-1–Ser-44 is a signal peptide. Positions Ile-42–Pro-139 are disordered. Low complexity predominate over residues Thr-48–Thr-61. The span at Asp-79–Leu-90 shows a compositional bias: polar residues. 2 stretches are compositionally biased toward low complexity: residues Thr-99–Pro-113 and Glu-122–Glu-133. Residues Trp-163 to Trp-165, Trp-175, Asp-221, Trp-270 to Trp-272, Trp-283, Lys-325, and Asn-330 contribute to the substrate site. Residues Ser-668 and Tyr-670 each coordinate Ca(2+). Substrate is bound by residues Tyr-674–Asp-675 and Phe-750. The Nucleophile role is filled by Asp-785. Catalysis depends on Glu-814, which acts as the Proton donor. Trp-816 serves as a coordination point for substrate. Ca(2+) contacts are provided by Met-835, Thr-838, and Asp-839. Substrate-binding residues include Asp-846, Arg-849, and Tyr-856. The Ca(2+) site is built by Asp-889 and Asp-893. Substrate-binding positions include Asn-903, Lys-976, and Asp-996–Tyr-998. Position 999 (Asp-999) interacts with Ca(2+). Positions Val-1147 to Asn-1255 are disordered. Positions Ser-1156–Asn-1203 are enriched in basic and acidic residues. A compositionally biased stretch (low complexity) spans Ser-1212–Ser-1225. The segment covering Glu-1228–Ser-1239 has biased composition (basic and acidic residues). Residues Leu-1253 to Gly-1257 carry the LPXTG sorting signal motif. Pentaglycyl murein peptidoglycan amidated threonine is present on Thr-1256. Residues Gly-1257–Asn-1287 constitute a propeptide, removed by sortase.

It belongs to the glycosyl hydrolase 13 family.

The protein resides in the secreted. It is found in the cell wall. The protein localises to the cell surface. It catalyses the reaction Hydrolysis of (1-&gt;6)-alpha-D-glucosidic linkages in pullulan, amylopectin and glycogen, and in the alpha- and beta-limit dextrins of amylopectin and glycogen.. Inhibited by 4-O-alpha-D-glucopyranosylmoranoline (G1M). In terms of biological role, virulence factor. Involved in the degradation of glycogen of the mammalian host cells. Hydrolyzes the alpha-1,6-branchpoints of glycogen. Hydrolyzes pullulan. Does not hydrolyze dextran. Binds to mouse lung alveolar type II cells that are rich in glycogen stores. Is an alpha-glucan-specific carbohydrate-binding protein, which binds to amylose (pure alpha-(1,4)-linked glucose), amylopectin (alpha-(1,4)-linked glucose with alpha-(1,6) branch points), pullulan (linear polymer of mixed alpha-(1,4)- and alpha-(1,6)-linked glucose) and glycogen (similar to amylopectin with more frequent alpha-(1,6) branch points) in vitro. Does not bind to dextran (a linear polymer of alpha-(1,6)-linked glucose). This is Pullulanase A from Streptococcus pneumoniae.